Reading from the N-terminus, the 1811-residue chain is MTDLEIETVSRVSSNPDEVKGSSVVEEEPDSESTIKSRVSDEIDEHDSIPEQSNTEKSIEINDKNLEAEKDIESNLSLRPPEDDLDSRSIESEQTGTLSKQTTSTSEAPQDLKIWKNISNASNQNSGKLNPQLFVIEAFKHMSKAKATKRHKKLREAINNVQIELQKQPFLLPEVILEPLVMACQTNSTTLLTITLDCFAKLIDYNYFDSPTLNPSDITLMERVVNTIASCFCGESTPERVQLQIVKALLAAITSERTIIRHSFLLTAVRQTYNIFLLCKDSTTQAIAQVALLQMVDSVFQRLSTVLNHEREFSTINMNKSSSNGTPDRANSPIPSQLSENKLTLESFEHRKSFDQVREEAPLEEDSLEQQLLRDAFLLIRALCKLSIKNIPYEHEYDLKSQSMRSKLMSLHLIYHILRTYMNILSDINVKIRSPTSTPTPLIDAVKQYICLALAKNVVSHVLPVFEISCEIFWLILSELKNFFKSELEVFFTEIFFPILEMRTSSNQQKIVLLNIFHRMCEEPQTLIELYLNYDCISGNTENIYERAIVTLSRIASQSTSDPPPSFVFRDDQLVIDKPGFVYHTLNDIPQLNSSTIGSYVHSHNPPYFDYQIRLKSYRCLISTLSSLFTWCNQTFAPTVEITAKDDETESTSKGEEPQKSKSEPPSAGINSTSMDNLESSGQALATDDPSQFENLKHRKKQLQEAIQKFNYKPKEGIKILLSSHFIASKTPTDIAKFLISTEGLDKAVLGEYLGEGNDENIAIMHSFVDHMSFNDIPFVNALRSFLQKFRLPGEAQKIDRFMLKFAEKYIDDNLGVFKNADTAYILAYSIIMLNTDLHSPQVKNRMTCQDFIKNNRGVDDGANLSDSFLTEVYEEIQKNEIVLKDEQDPTSNFPEIPGTSNLSFAANISNALATVGRDLQREAYYMASNKMANKTEALFKDLIREQRERGKLSGNDIYYTARHFEHVCPMFEAVWMPILAAFSEPLQLSSDPALIQLSLDGFRLAMNVIFFFSMDLPRNAFMQTLTKFTHLNNTSELKWTNMHALKTLLEISLAHGDKLRDSWKDVLLCISQLERVQLISAGVDINSLPDVSTTKPLRKSLDKNIRQSRSGSISLKHSKSFQSASTHSTKSSSVEIVREYSSREVVMAVDMLFSNTRNLGSEGIYDFVKALIEVSWEEIECSLELSNPRLFSLQKLVEISYYNMRRIRMEWSSIWSLLGTYFTQVSCHENSIIASFALDSLRQFSMQFLEIEELSHFKFQKDFLQPFSHAMENSQDLKIKDLVLRCIDQMIKARYQNIRSGWRTIFHILAYASKIENLLVLQCAISVVSSLGHEHISCVLTQGAYIDLISCITKFAKLNGNQKFCLSCVDMLKNLEHELIKHLKHMKKESVYSKKLEEEYWLPFLLSFNEIICEASDLEVRSKALKVLFDCLYRHADDFDEEFWETVSNKALLSIFSILSITNSQRLYLAKNTEETEVWMLTTMVEALKAFIELIKNLFERLHFLLPKALNLLEKCICQENSMISKVGLSCFSQFVLKNKNQFKDVDWDEIINSINQLLQMTLPIELRDPSLYPQVNSDSSLEDVKENSFRPHEISRFNSQSVFKSKKHHLKSIVVKCTLQLLMLNCLWELFHSDNMLTNIPKRKMVKLLDILKQSWEFAESFNSDFEIRAKILSSGIVEHMPNLLSQEALCAKLYFYTAFECMSSLKSDSHDTEEYNDLMDVFQKKIYLASQLVLHGFQRVIGDNPVKGVAAFQPVIAALVSYINSLDEIQFSRGKSEFYQLLCAIVACGHIDQQLGTSLSNAFLRYAC.

2 disordered regions span residues 1-108 (MTDL…TSEA) and 316-336 (INMN…PIPS). Composition is skewed to basic and acidic residues over residues 33–49 (STIK…HDSI), 57–73 (KSIE…KDIE), and 80–91 (PPEDDLDSRSIE). S40 is modified (phosphoserine). Polar residues-rich tracts occupy residues 92 to 108 (SEQT…TSEA) and 316 to 326 (INMNKSSSNGT). The residue at position 326 (T326) is a Phosphothreonine. A phosphoserine mark is found at S332 and S353. An HUS box motif is present at residues 533 to 537 (NYDCI). Residues 643–663 (TAKDDETESTSKGEEPQKSKS) are compositionally biased toward basic and acidic residues. A disordered region spans residues 643-688 (TAKDDETESTSKGEEPQKSKSEPPSAGINSTSMDNLESSGQALATD). Positions 669–688 (GINSTSMDNLESSGQALATD) are enriched in polar residues. Residues 692 to 880 (QFENLKHRKK…TEVYEEIQKN (189 aa)) form the SEC7 domain. Phosphoserine is present on S741. T742 carries the phosphothreonine modification. A Mg(2+)-binding site is contributed by D812. The interval 889–1103 (DPTSNFPEIP…TTKPLRKSLD (215 aa)) is HDS1 domain.

The protein resides in the cytoplasm. The protein localises to the golgi apparatus. Its subcellular location is the trans-Golgi network. It localises to the cytoplasmic vesicle. It is found in the COPI-coated vesicle membrane. The protein resides in the COPII-coated vesicle membrane. In terms of biological role, guanine exchange factor that acts as an activator of arf1 at the trans-Golgi net-work and is thus involved in vesicular budding and traffic between compartments of the Golgi apparatus. Activation of Arf (ADP-ribosylation factor) GTPases is essential for vesicle formation via recruitment of cargo adapters and coat proteins necessary for Golgi trafficking. Involved in tunicamycin-induced ER stress response and subsequent apoptosis. The sequence is that of ADP-ribosylation factor guanine nucleotide-exchange factor sec71 from Schizosaccharomyces pombe (strain 972 / ATCC 24843) (Fission yeast).